The chain runs to 141 residues: MAKKVVAEVKLQLPAGKATPAPPVGPALGQRGVNIMEFCKRFNAETADKAGMILPVIITVYEDRSFSFVVKTPPASFLLKRAAGLEKGSGEPKRKNVGKVTRKQLEEIAKIKMPDITANDLEAAVKIVEGTAKSMGIEIVD.

Belongs to the universal ribosomal protein uL11 family. Part of the ribosomal stalk of the 50S ribosomal subunit. Interacts with L10 and the large rRNA to form the base of the stalk. L10 forms an elongated spine to which L12 dimers bind in a sequential fashion forming a multimeric L10(L12)X complex. In terms of processing, one or more lysine residues are methylated.

In terms of biological role, forms part of the ribosomal stalk which helps the ribosome interact with GTP-bound translation factors. The polypeptide is Large ribosomal subunit protein uL11 (Pseudothermotoga lettingae (strain ATCC BAA-301 / DSM 14385 / NBRC 107922 / TMO) (Thermotoga lettingae)).